The following is a 445-amino-acid chain: Argininosuccinate synthase (445 aa).

ATP-binding positions include alanine 17–serine 25 and alanine 43. Position 99 (tyrosine 99) interacts with L-citrulline. ATP contacts are provided by glycine 129 and threonine 131. Residues threonine 131, asparagine 135, and aspartate 136 each contribute to the L-aspartate site. Asparagine 135 is a binding site for L-citrulline. Residue aspartate 136 coordinates ATP. Residues arginine 139 and serine 192 each contribute to the L-citrulline site. Aspartate 194 contributes to the ATP binding site. L-citrulline contacts are provided by threonine 201, glutamate 203, and glutamate 280.

Belongs to the argininosuccinate synthase family. Type 2 subfamily. As to quaternary structure, homotetramer.

It is found in the cytoplasm. The catalysed reaction is L-citrulline + L-aspartate + ATP = 2-(N(omega)-L-arginino)succinate + AMP + diphosphate + H(+). Its pathway is amino-acid biosynthesis; L-arginine biosynthesis; L-arginine from L-ornithine and carbamoyl phosphate: step 2/3. This chain is Argininosuccinate synthase, found in Rhodopseudomonas palustris (strain BisA53).